The following is a 783-amino-acid chain: Mitochondrial intermediate peptidase (783 aa).

Residues Met-1–Phe-33 constitute a mitochondrion transit peptide. His-565 lines the Zn(2+) pocket. The active site involves Glu-566. Residues His-569 and His-572 each coordinate Zn(2+).

This sequence belongs to the peptidase M3 family. Requires Zn(2+) as cofactor.

Its subcellular location is the mitochondrion matrix. It catalyses the reaction Release of an N-terminal octapeptide as second stage of processing of some proteins imported into the mitochondrion.. Functionally, cleaves proteins, imported into the mitochondrion, to their mature size. While most mitochondrial precursor proteins are processed to the mature form in one step by mitochondrial processing peptidase (MPP), the sequential cleavage by MIP of an octapeptide after initial processing by MPP is a required step for a subgroup of nuclear-encoded precursor proteins destined for the matrix or the inner membrane. The polypeptide is Mitochondrial intermediate peptidase (OCT1) (Candida albicans (strain SC5314 / ATCC MYA-2876) (Yeast)).